The primary structure comprises 274 residues: MAVVKSKPTSAGRRHVVKVTNNDLHKGAPYAPLLDTKSKSGGRNNNGRITTRHVGGGHKQHYRMVDFRRNKDGISAVVERLEYDPNRSANIALIRYADGERRYIIASKGMVAGNIVFSGADAPIKAGNTLPLQNIPVGSTVHCVELKPGKGAQVARSAGASAQLVAREGRYVTLRLRSGEMRKVLTECRATLGEVSNSEHSLRVLGKAGATRWRGVRPTVRGAAMNPVDHPHGGGEGRSKGGRHPVTPWGVPTKGYKTRSNKRTDKLIVRRRTK.

Disordered regions lie at residues 28–59 (APYA…GGHK) and 222–274 (GAAM…RRTK). Polar residues predominate over residues 39–49 (KSGGRNNNGRI). Residues 229–239 (DHPHGGGEGRS) show a composition bias toward basic and acidic residues.

The protein belongs to the universal ribosomal protein uL2 family. As to quaternary structure, part of the 50S ribosomal subunit. Forms a bridge to the 30S subunit in the 70S ribosome.

In terms of biological role, one of the primary rRNA binding proteins. Required for association of the 30S and 50S subunits to form the 70S ribosome, for tRNA binding and peptide bond formation. It has been suggested to have peptidyltransferase activity; this is somewhat controversial. Makes several contacts with the 16S rRNA in the 70S ribosome. This is Large ribosomal subunit protein uL2 from Marinomonas sp. (strain MWYL1).